Consider the following 726-residue polypeptide: MSTTDDTHNTLSTGKCPFHQGGHDRSAGAGTASRDWWPNQLRVDLLNQHSNRSNPLGEDFDYRKEFSKLDYSALKGDLKALLTDSQPWWPADWGSYVGLFIRMAWHGAGTYRSIDGRGGAGRGQQRFAPLNSWPDNVSLDKARRLLWPIKQKYGQKISWADLFILAGNVALENSGFRTFGFGAGREDVWEPDLDVNWGDEKAWLTHRHPEALAKAPLGATEMGLIYVNPEGPDHSGEPLSAAAAIRATFGNMGMNDEETVALIAGGHTLGKTHGAAAASHVGADPEAAPIEAQGLGWASSYGSGVGADAITSGLEVVWTQTPTQWSNYFFENLFKYEWVQTRSPAGAIQFEAVDAPDIIPDPFDPSKKRKPTMLVTDLTLRFDPEFEKISRRFLNDPQAFNEAFARAWFKLTHRDMGPKARYIGPEVPKEDLIWQDPLPQPLYQPTQEDIINLKAAIAASGLSISEMVSVAWASASTFRGGDKRGGANGARLALAPQRDWEVNAVAARVLPVLEALQKTTNKASLADIIVLAGVVGIEQAAAAAGVSISVPFAPGRVDARQDQTDIEMFSLLEPIADGFRNYRARLDVSTTESLLIDKAQQLTLTAPEMTVLVGGMRVLGTNFDGSQNGVFTDRPGVLSTDFFANLLDMRYEWKPTDESNELFEGRDRLTGEVKYTATRADLVFGSNSVLRALAEVYACSDAHEKFVKDFVAAWVKVMNLDRFDLL.

The interval 1-33 (MSTTDDTHNTLSTGKCPFHQGGHDRSAGAGTAS) is disordered. The segment at residues 105-226 (WHGAGTYRSI…LGATEMGLIY (122 aa)) is a cross-link (tryptophyl-tyrosyl-methioninium (Trp-Tyr) (with M-252)). Histidine 106 functions as the Proton acceptor in the catalytic mechanism. A cross-link (tryptophyl-tyrosyl-methioninium (Tyr-Met) (with W-105)) is located at residues 226–252 (YVNPEGPDHSGEPLSAAAAIRATFGNM). Position 267 (histidine 267) interacts with heme b.

It belongs to the peroxidase family. Peroxidase/catalase subfamily. Homodimer or homotetramer. It depends on heme b as a cofactor. In terms of processing, formation of the three residue Trp-Tyr-Met cross-link is important for the catalase, but not the peroxidase activity of the enzyme.

The enzyme catalyses H2O2 + AH2 = A + 2 H2O. The catalysed reaction is 2 H2O2 = O2 + 2 H2O. Functionally, bifunctional enzyme with both catalase and broad-spectrum peroxidase activity. The polypeptide is Catalase-peroxidase (Salmonella paratyphi A (strain ATCC 9150 / SARB42)).